Here is a 405-residue protein sequence, read N- to C-terminus: Threonine synthase (405 aa).

N6-(pyridoxal phosphate)lysine is present on Lys-104. Residues Asn-130, 231-235 (GNAGN), and Thr-369 contribute to the pyridoxal 5'-phosphate site.

It belongs to the threonine synthase family. Homotrimer. Requires pyridoxal 5'-phosphate as cofactor.

The enzyme catalyses O-phospho-L-homoserine + H2O = L-threonine + phosphate. It functions in the pathway amino-acid biosynthesis; L-threonine biosynthesis; L-threonine from L-aspartate: step 5/5. Catalyzes the gamma-elimination of phosphate from L-phosphohomoserine and the beta-addition of water to produce L-threonine. Does not catalyze the conversion of O-acetyl-L-homoserine into threonine. The protein is Threonine synthase (thrC) of Methanosarcina acetivorans (strain ATCC 35395 / DSM 2834 / JCM 12185 / C2A).